The primary structure comprises 633 residues: tRNA uridine 5-carboxymethylaminomethyl modification enzyme MnmG (633 aa).

FAD contacts are provided by residues 15 to 20 (GAGHAG), Ile-127, and Ser-182. 276-290 (GPRYCPSIEDKIVRF) lines the NAD(+) pocket. Residue Gln-373 participates in FAD binding.

Belongs to the MnmG family. In terms of assembly, homodimer. Heterotetramer of two MnmE and two MnmG subunits. The cofactor is FAD.

Its subcellular location is the cytoplasm. Its function is as follows. NAD-binding protein involved in the addition of a carboxymethylaminomethyl (cmnm) group at the wobble position (U34) of certain tRNAs, forming tRNA-cmnm(5)s(2)U34. The sequence is that of tRNA uridine 5-carboxymethylaminomethyl modification enzyme MnmG from Streptococcus agalactiae serotype Ia (strain ATCC 27591 / A909 / CDC SS700).